Reading from the N-terminus, the 401-residue chain is Acetate kinase (401 aa).

Asparagine 9 contacts Mg(2+). An ATP-binding site is contributed by lysine 16. Residue arginine 88 participates in substrate binding. The active-site Proton donor/acceptor is aspartate 147. ATP is bound by residues 207 to 211 (HLGNG), 282 to 284 (DCR), and 333 to 337 (GIGEN). Glutamate 388 contributes to the Mg(2+) binding site.

It belongs to the acetokinase family. Homodimer. Requires Mg(2+) as cofactor. The cofactor is Mn(2+).

The protein resides in the cytoplasm. It carries out the reaction acetate + ATP = acetyl phosphate + ADP. It functions in the pathway metabolic intermediate biosynthesis; acetyl-CoA biosynthesis; acetyl-CoA from acetate: step 1/2. Its function is as follows. Catalyzes the formation of acetyl phosphate from acetate and ATP. Can also catalyze the reverse reaction. This is Acetate kinase from Haemophilus influenzae (strain PittEE).